A 920-amino-acid chain; its full sequence is Probable helicase HelY (920 aa).

A Helicase ATP-binding domain is found at 26–184 (CAALERGHGV…WVQTVRGDTT (159 aa)). 39-46 (APTGAGKT) contributes to the ATP binding site. The DEVH box motif lies at 132-135 (DEVH). The region spanning 265–469 (EVIAILDAEG…SYNMTINLVH (205 aa)) is the Helicase C-terminal domain.

It belongs to the helicase family. SKI2 subfamily.

The protein is Probable helicase HelY (helY) of Mycobacterium leprae (strain TN).